Consider the following 324-residue polypeptide: Glutathione synthetase (324 aa).

Positions Lys129–Val313 constitute an ATP-grasp domain. Residue Val155 to Gly211 participates in ATP binding. Mg(2+) is bound by residues Glu284 and Asn286.

Belongs to the prokaryotic GSH synthase family. Mg(2+) serves as cofactor. Mn(2+) is required as a cofactor.

The catalysed reaction is gamma-L-glutamyl-L-cysteine + glycine + ATP = glutathione + ADP + phosphate + H(+). Its pathway is sulfur metabolism; glutathione biosynthesis; glutathione from L-cysteine and L-glutamate: step 2/2. The sequence is that of Glutathione synthetase from Gloeobacter violaceus (strain ATCC 29082 / PCC 7421).